A 273-amino-acid polypeptide reads, in one-letter code: Large ribosomal subunit protein uL2c (273 aa).

Disordered regions lie at residues 30–55 and 222–243; these read EKKLTRGWSRAQGRNNKGRITTRHRG and GSAMNPVDHPHGGGEGKAPIGR. The segment covering 45–55 has biased composition (basic residues); the sequence is NKGRITTRHRG.

This sequence belongs to the universal ribosomal protein uL2 family. Part of the 50S ribosomal subunit.

Its subcellular location is the plastid. The polypeptide is Large ribosomal subunit protein uL2c (rpl2) (Prototheca wickerhamii).